The following is a 443-amino-acid chain: Tol-Pal system protein TolB (443 aa).

The signal sequence occupies residues Met1–Ala24. The tract at residues Leu424–Arg443 is disordered.

Belongs to the TolB family. The Tol-Pal system is composed of five core proteins: the inner membrane proteins TolA, TolQ and TolR, the periplasmic protein TolB and the outer membrane protein Pal. They form a network linking the inner and outer membranes and the peptidoglycan layer.

The protein localises to the periplasm. In terms of biological role, part of the Tol-Pal system, which plays a role in outer membrane invagination during cell division and is important for maintaining outer membrane integrity. The polypeptide is Tol-Pal system protein TolB (Roseobacter denitrificans (strain ATCC 33942 / OCh 114) (Erythrobacter sp. (strain OCh 114))).